Reading from the N-terminus, the 846-residue chain is Protein IRS1 (846 aa).

4 disordered regions span residues 1 to 82 (MAQR…NFWH), 366 to 385 (TGTA…ETEA), 606 to 626 (WLME…ATMP), and 714 to 846 (QVIP…HVHH). Residues 16-25 (RGRGAGGPSG) are compositionally biased toward gly residues. Low complexity predominate over residues 26–56 (VGSSPPSSCVPMGAPSTAGTGASAAATTTPG). A compositionally biased stretch (acidic residues) spans 722 to 732 (EPEDDDEDPTY). The segment covering 832–846 (RPKKCQTHAPHHVHH) has biased composition (basic residues).

Belongs to the herpesviridae US22 family. Interacts (via N-terminus) with the viral DNA polymerase accessory subunit UL44. Interacts (via C-terminus) with host EIF2AK2/PKR.

The protein localises to the virion. The protein resides in the host cytoplasm. It is found in the host nucleus. In terms of biological role, inhibits the establishment of the antiviral state in the infected cell. Prevents the phosphorylation of the host eukaryotic translation initiation factor eIF-2alpha and thus the shutoff of viral and cellular protein synthesis by directly interacting with EIF2AK2/PKR. May also participate in viral DNA replication by interacting with the DNA polymerase accessory protein and the lytic origin of replication, oriLyt. The protein is Protein IRS1 (IRS1) of Homo sapiens (Human).